A 253-amino-acid chain; its full sequence is DNA repair protein RecO (253 aa).

It belongs to the RecO family.

Involved in DNA repair and RecF pathway recombination. The chain is DNA repair protein RecO from Streptococcus agalactiae serotype III (strain NEM316).